Reading from the N-terminus, the 132-residue chain is Large ribosomal subunit protein uL14 (132 aa).

It belongs to the universal ribosomal protein uL14 family. In terms of assembly, part of the 50S ribosomal subunit. Forms a cluster with proteins L3 and L24e, part of which may contact the 16S rRNA in 2 intersubunit bridges.

Its function is as follows. Binds to 23S rRNA. Forms part of two intersubunit bridges in the 70S ribosome. The polypeptide is Large ribosomal subunit protein uL14 (Natronomonas pharaonis (strain ATCC 35678 / DSM 2160 / CIP 103997 / JCM 8858 / NBRC 14720 / NCIMB 2260 / Gabara) (Halobacterium pharaonis)).